A 359-amino-acid polypeptide reads, in one-letter code: MRQILFAAGIALAVSILLTPVLIKAFSRQGFGQEIRVEGPASHQSKRGTPTMGGVAILAGLWAGYWGSHLIGIGYNADGPSASGLLVLGLTTALGGVGFLDDFIKIRKQRNLGLNKTAKLVGQLIAAVAFGILALQFRGANDLTPGSEHLSYVRDIATVTMGSVVFVAFCYLLVSAWSNAVNLTDGLDGLAAGSMSLVLGAYVIITFWQYRNACETSPGKGCYDVRDPLDLALICAAGAGACIGFLWWNAAPAKIFMGDTGSLALGGMLAGLSITTRTELLMVVIGALFVAEAASVVIQVAVFRSSRRRVFRMAPFHHHFELAGWAETTVIIRFWLLAAIASAIGLALFYSEYLAAIGG.

10 helical membrane passes run 3–23, 53–73, 84–104, 117–137, 156–176, 187–207, 231–251, 255–275, 283–303, and 330–350; these read QILF…PVLI, GGVA…LIGI, GLLV…DDFI, TAKL…ALQF, IATV…LVSA, LDGL…IITF, LALI…WNAA, IFMG…LSIT, VVIG…VAVF, and VIIR…ALFY.

This sequence belongs to the glycosyltransferase 4 family. MraY subfamily. The cofactor is Mg(2+).

It is found in the cell membrane. It carries out the reaction UDP-N-acetyl-alpha-D-muramoyl-L-alanyl-gamma-D-glutamyl-meso-2,6-diaminopimeloyl-D-alanyl-D-alanine + di-trans,octa-cis-undecaprenyl phosphate = di-trans,octa-cis-undecaprenyl diphospho-N-acetyl-alpha-D-muramoyl-L-alanyl-D-glutamyl-meso-2,6-diaminopimeloyl-D-alanyl-D-alanine + UMP. It functions in the pathway cell wall biogenesis; peptidoglycan biosynthesis. Functionally, catalyzes the initial step of the lipid cycle reactions in the biosynthesis of the cell wall peptidoglycan: transfers peptidoglycan precursor phospho-MurNAc-pentapeptide from UDP-MurNAc-pentapeptide onto the lipid carrier undecaprenyl phosphate, yielding undecaprenyl-pyrophosphoryl-MurNAc-pentapeptide, known as lipid I. This chain is Phospho-N-acetylmuramoyl-pentapeptide-transferase, found in Rhodococcus jostii (strain RHA1).